The sequence spans 1402 residues: Phospholipid-transporting ATPase dnf2 (1402 aa).

4 consecutive transmembrane segments (helical) span residues 109–129, 135–155, 457–477, and 501–521; these read FQNVANLFFLFLVILQSISIF, PGLAAVPLIVVVGITAVKDAI, LNFIILFSMCFVCAVVEGIAW, and VVTFFTGVILFQNLVPISLYI. The active-site 4-aspartylphosphate intermediate is the Asp-569. ATP contacts are provided by Asp-569, Lys-570, Thr-571, Glu-700, Phe-741, Ser-743, Lys-746, Lys-764, Arg-799, Thr-800, Thr-879, Gly-880, Asp-881, Arg-986, and Lys-992. A Mg(2+)-binding site is contributed by Asp-569. Residue Thr-571 participates in Mg(2+) binding. Asp-1012 contributes to the Mg(2+) binding site. Positions 1015 and 1016 each coordinate ATP. Residue Asp-1016 participates in Mg(2+) binding. The next 6 helical transmembrane spans lie at 1066 to 1086, 1101 to 1121, 1151 to 1171, 1193 to 1213, 1218 to 1238, and 1260 to 1280; these read VAEMVNNFFYKSVVWTFTLFW, YTYVMLFNLIFSSLPVIVMGV, IFIGYMLDGFYQSVICFFFSF, LGVYVAAPTIMVVDTYVILNQ, VFSIGLWALSCLTFWFWTGVY, and FWAVLCGTIVSCLFPKFLFMT. Lys-1275 contacts a 1,2-diacyl-sn-glycero-3-phospho-L-serine.

The protein belongs to the cation transport ATPase (P-type) (TC 3.A.3) family. Type IV subfamily. Requires Mg(2+) as cofactor.

Its subcellular location is the cell membrane. The protein resides in the endoplasmic reticulum membrane. The enzyme catalyses ATP + H2O + phospholipidSide 1 = ADP + phosphate + phospholipidSide 2.. It carries out the reaction a 1,2-diacyl-sn-glycero-3-phosphoethanolamine(out) + ATP + H2O = a 1,2-diacyl-sn-glycero-3-phosphoethanolamine(in) + ADP + phosphate + H(+). It catalyses the reaction a 1,2-diacyl-sn-glycero-3-phosphocholine(out) + ATP + H2O = a 1,2-diacyl-sn-glycero-3-phosphocholine(in) + ADP + phosphate + H(+). The catalysed reaction is a beta-D-glucosyl-(1&lt;-&gt;1')-N-acylsphing-4-enine(out) + ATP + H2O = a beta-D-glucosyl-(1&lt;-&gt;1')-N-acylsphing-4-enine(in) + ADP + phosphate + H(+). The enzyme catalyses a 1,2-diacyl-sn-glycero-3-phospho-L-serine(out) + ATP + H2O = a 1,2-diacyl-sn-glycero-3-phospho-L-serine(in) + ADP + phosphate + H(+). Catalytic component of a P4-ATPase flippase complex which catalyzes the hydrolysis of ATP coupled to the transport of glucosylceramide, phosphatidylcholine, phosphatidylethanolamine, and small amounts of phosphatidylserine from the lumenal to the cytosolic leaflet of the cell membrane and ensures the maintenance of asymmetric distribution of phospholipids. This chain is Phospholipid-transporting ATPase dnf2, found in Schizosaccharomyces pombe (strain 972 / ATCC 24843) (Fission yeast).